A 315-amino-acid chain; its full sequence is Type II methyltransferase M.Bsp6I (315 aa).

The SAM-dependent MTase C5-type domain maps to 2-315 (LQIASLFAGV…IAENIYKSML (314 aa)). The active site involves cysteine 73.

It belongs to the class I-like SAM-binding methyltransferase superfamily. C5-methyltransferase family.

The enzyme catalyses a 2'-deoxycytidine in DNA + S-adenosyl-L-methionine = a 5-methyl-2'-deoxycytidine in DNA + S-adenosyl-L-homocysteine + H(+). A methylase that recognizes the double-stranded sequence 5'-GCNGC-3', methylates C-? on both strands, and protects the DNA from cleavage by the Bsp6I endonuclease. The polypeptide is Type II methyltransferase M.Bsp6I (Bacillus sp. (strain RFL6)).